We begin with the raw amino-acid sequence, 101 residues long: Thioredoxin 1 (101 aa).

Residues 2 to 101 (AQTLDDLIRT…MRQEVLKAIG (100 aa)) form the Thioredoxin domain. Cysteine 25 and cysteine 28 are disulfide-bonded.

This sequence belongs to the thioredoxin family.

In terms of biological role, participates in various redox reactions through the reversible oxidation of its active center dithiol to a disulfide and catalyzes dithiol-disulfide exchange reactions. This is Thioredoxin 1 (trx1) from Chlorobaculum tepidum (strain ATCC 49652 / DSM 12025 / NBRC 103806 / TLS) (Chlorobium tepidum).